A 630-amino-acid chain; its full sequence is YTH domain-containing family protein 1 (630 aa).

Disordered regions lie at residues 38–113 (DMTQ…YMQQ), 160–183 (YYPQ…AGPY), and 200–241 (QVGD…QSGH). A compositionally biased stretch (polar residues) spans 70 to 102 (PGQQQQHQYGSPPNTNGNAQPMPQAHGNNTMNS). The YTH domain occupies 382-590 (EKYFILKSLT…SVGRKLTGLF (209 aa)).

It belongs to the YTHDF family. YTHDF1 subfamily.

The protein resides in the cytoplasm. It is found in the P-body. Its function is as follows. Specifically recognizes and binds N6-methyladenosine (m6A)-containing mRNAs, and regulates their stability. M6A is a modification present at internal sites of mRNAs and some non-coding RNAs and plays a role in mRNA stability and processing. Plays a role in pathogenicity towards plant host. The sequence is that of YTH domain-containing family protein 1 from Pyricularia oryzae (strain 70-15 / ATCC MYA-4617 / FGSC 8958) (Rice blast fungus).